The sequence spans 468 residues: ATP synthase subunit beta (468 aa).

Residue Gly-148 to Thr-155 participates in ATP binding.

This sequence belongs to the ATPase alpha/beta chains family. As to quaternary structure, F-type ATPases have 2 components, CF(1) - the catalytic core - and CF(0) - the membrane proton channel. CF(1) has five subunits: alpha(3), beta(3), gamma(1), delta(1), epsilon(1). CF(0) has three main subunits: a(1), b(2) and c(9-12). The alpha and beta chains form an alternating ring which encloses part of the gamma chain. CF(1) is attached to CF(0) by a central stalk formed by the gamma and epsilon chains, while a peripheral stalk is formed by the delta and b chains.

It is found in the cell inner membrane. The catalysed reaction is ATP + H2O + 4 H(+)(in) = ADP + phosphate + 5 H(+)(out). Produces ATP from ADP in the presence of a proton gradient across the membrane. The catalytic sites are hosted primarily by the beta subunits. The protein is ATP synthase subunit beta of Xanthomonas oryzae pv. oryzae (strain KACC10331 / KXO85).